The primary structure comprises 289 residues: Nucleotide-binding protein CHY_0272 (289 aa).

Residue 8–15 (GLSGAGKT) coordinates ATP. A GTP-binding site is contributed by 59–62 (DVRG).

It belongs to the RapZ-like family.

Functionally, displays ATPase and GTPase activities. The chain is Nucleotide-binding protein CHY_0272 from Carboxydothermus hydrogenoformans (strain ATCC BAA-161 / DSM 6008 / Z-2901).